The primary structure comprises 1014 residues: Valine--tRNA ligase (1014 aa).

Positions 49-59 match the 'HIGH' region motif; that stretch reads PNVTGSLHMGH. Positions 542–546 match the 'KMSKS' region motif; sequence KMSKS. ATP is bound at residue lysine 545. The stretch at 947-1014 forms a coiled coil; sequence VVDIETLRAK…ILRLRLQTLV (68 aa).

Belongs to the class-I aminoacyl-tRNA synthetase family. ValS type 1 subfamily. Monomer.

It localises to the cytoplasm. It carries out the reaction tRNA(Val) + L-valine + ATP = L-valyl-tRNA(Val) + AMP + diphosphate. Functionally, catalyzes the attachment of valine to tRNA(Val). As ValRS can inadvertently accommodate and process structurally similar amino acids such as threonine, to avoid such errors, it has a 'posttransfer' editing activity that hydrolyzes mischarged Thr-tRNA(Val) in a tRNA-dependent manner. The chain is Valine--tRNA ligase from Nostoc sp. (strain PCC 7120 / SAG 25.82 / UTEX 2576).